We begin with the raw amino-acid sequence, 155 residues long: MLRIKYPKFLNCIKYIPKGSDICIIEAIESLAYGNSESKYLSTMLEQNGNDYKKLINIIIEKYDLQVIVKNNKYVTNYEDDDTKEGKKKKAIKDIMVENYLIRMKVEKGLSISQIKKILFKINLRLFLKMLPLKNILIEDGEIISILDPIIDDLD.

This sequence belongs to the IIV-6 145L family.

This is an uncharacterized protein from Acheta domesticus (House cricket).